The primary structure comprises 180 residues: MAESGKEKIKWTTTIIISSSLKSYEVATALENRSHKVRYSDSVENGSIIFSLSGVAFLLMDTKECLLSTEEIFLAKIEKFINIHQNSFLVLSAALHGPEEWKLMFRIQQRFLGCNLRILPVHNTVNAINLMCTIAKTTSKPYIDSICYRMITAKAYIIEQSPVWKTLQKIKLNSDSVNPN.

In terms of assembly, homooligomer. Interacts with SHOC, SYCP1 and SYCE3.

Its subcellular location is the chromosome. Its function is as follows. Plays a key role in reinforcing the integrity of the central element of the synaptonemal complex (SC) thereby stabilizing SC, ensuring progression of meiotic prophase I in male and female germ cells. Promotes homologous recombination and crossing-over in meiotic prophase I via its association with SHOC1. Required for the localization of TEX11 and MSH4 to recombination intermediates. The chain is Protein SPO16 homolog from Homo sapiens (Human).